An 863-amino-acid chain; its full sequence is Dynamin-3 (863 aa).

Positions 28–294 (LLELPQIAVV…LTNHIRDTLP (267 aa)) constitute a Dynamin-type G domain. Residues 38-45 (GGQSAGKS) are G1 motif. 38 to 46 (GGQSAGKSS) lines the GTP pocket. Positions 64–66 (VTR) are G2 motif. The tract at residues 136–139 (DLPG) is G3 motif. Residues 205–208 (TKLD) are G4 motif. 205-211 (TKLDLMD) serves as a coordination point for GTP. Tyrosine 231 is subject to Phosphotyrosine. Residues 235 to 238 (VNRS) are G5 motif. 236 to 239 (NRSQ) contributes to the GTP binding site. The residue at position 299 (lysine 299) is an N6-acetyllysine. The PH domain occupies 515–621 (QVIRKGWLTV…WKASLLRAGV (107 aa)). Tyrosine 593 carries the post-translational modification Phosphotyrosine. Lysine 594 bears the N6-acetyllysine mark. 2 disordered regions span residues 626 to 647 (SVGSNKTENDENGQAENFSMDP) and 742 to 863 (ATVS…SLLD). Residues 627–642 (VGSNKTENDENGQAEN) show a composition bias toward polar residues. Residues 653–744 (VETIRNLVDS…IIGDINTATV (92 aa)) enclose the GED domain. A phosphoserine mark is found at serine 763 and serine 767. Composition is skewed to pro residues over residues 791-816 (PAIPSPGPHSGAPPVPFRPGPLPPFP) and 826-849 (PQVPSRPTRAPPSVPSRRPPPSPT). Phosphoserine is present on serine 847.

Belongs to the TRAFAC class dynamin-like GTPase superfamily. Dynamin/Fzo/YdjA family.

Its subcellular location is the cytoplasm. The protein resides in the cytoskeleton. It catalyses the reaction GTP + H2O = GDP + phosphate + H(+). In terms of biological role, microtubule-associated force-producing protein involved in producing microtubule bundles and able to bind and hydrolyze GTP. Most probably involved in vesicular trafficking processes, in particular endocytosis. This Mus musculus (Mouse) protein is Dynamin-3 (Dnm3).